A 536-amino-acid chain; its full sequence is Glucose-6-phosphate isomerase (536 aa).

The active-site Proton donor is Glu345. Active-site residues include His376 and Lys505.

The protein belongs to the GPI family.

It is found in the cytoplasm. It catalyses the reaction alpha-D-glucose 6-phosphate = beta-D-fructose 6-phosphate. The protein operates within carbohydrate biosynthesis; gluconeogenesis. It participates in carbohydrate degradation; glycolysis; D-glyceraldehyde 3-phosphate and glycerone phosphate from D-glucose: step 2/4. Its function is as follows. Catalyzes the reversible isomerization of glucose-6-phosphate to fructose-6-phosphate. In Ruegeria sp. (strain TM1040) (Silicibacter sp.), this protein is Glucose-6-phosphate isomerase.